We begin with the raw amino-acid sequence, 596 residues long: uncharacterized protein (596 aa).

A helical transmembrane segment spans residues 7-26 (FWPILLGFTVLVAAGLYYVV).

Its subcellular location is the membrane. This is an uncharacterized protein from Sinorhizobium fredii (strain NBRC 101917 / NGR234).